A 227-amino-acid chain; its full sequence is A-type potassium channel modulatory protein KCNIP1 (227 aa).

In terms of domain architecture, EF-hand 1; degenerate spans 38-94; the sequence is LEMTMVCHRPEGLEQLEAQTNFTKRELQVLYRGFKNECPSGVVNEDTFKQIYAQFFP. EF-hand domains are found at residues 97–132, 133–168, and 181–216; these read DASTYAHYLFNAFDTTQTGSVKFEDFVTALSILLRG, TVHEKLRWTFNLYDINKDGYINKEEMMDIVKAIYDM, and TPRQHVDVFFQKMDKNKDGIVTLDEFLESCQEDDNI. Positions 146, 148, 150, 152, 157, 194, 196, 198, and 205 each coordinate Ca(2+). An interaction with KCND2 region spans residues 214 to 227; it reads DNIMRSLQLFQNVM.

This sequence belongs to the recoverin family. As to quaternary structure, component of heteromultimeric potassium channels. Identified in potassium channel complexes containing KCND1, KCND2, KCND3, KCNIP1, KCNIP2, KCNIP3, KCNIP4, DPP6 and DPP10. Part of a heterooctamer composed of the tetrameric channel and four KCNIP1 chains. Probably part of a complex consisting of KCNIP1, KCNIP2 isoform 3 and KCND2. Self-associates to form homodimers and homotetramers. Interacts with KCNIP2 isoform 3 in a calcium-dependent manner. Interacts with Naja atra venom CTX3. Interacts with KCND2; this interaction mediates the capture of both the N- and C-terminus of KCND2, thus preventing KCND2 N-type inactivation and modulates the channel gating kinetics. Interacts with KCND3; each KCNIP1 monomer interacts with two adjacent KCND3 subunits, through both the N-terminal inactivation ball of a KCND3 subunit and a C-terminal helix from the adjacent KCND3 subunit, clamping them together; this interaction stabilizes the tetrameric form and modulates the channel gating kinetics namely channel activation and inactivation kinetics and rate of recovery from inactivation. As to expression, isoform 1 and isoform 2 are expressed in brain and kidney. Isoform 1 is also expressed in liver, pancreas, skeletal muscle, small intestine and testis. Isoform 2 is also expressed in lung, pancreas, leukocytes, prostate and thymus.

The protein localises to the cell membrane. The protein resides in the cytoplasm. Its subcellular location is the cell projection. It is found in the dendrite. Its function is as follows. Regulatory subunit of Kv4/D (Shal)-type voltage-gated rapidly inactivating A-type potassium channels. Regulates channel density, inactivation kinetics and rate of recovery from inactivation in a calcium-dependent and isoform-specific manner. In vitro, modulates KCND1/Kv4.1 and KCND2/Kv4.2 currents. Increases the presence of KCND2 at the cell surface. This chain is A-type potassium channel modulatory protein KCNIP1, found in Homo sapiens (Human).